The primary structure comprises 156 residues: Small ribosomal subunit protein uS7 (156 aa).

This sequence belongs to the universal ribosomal protein uS7 family. Part of the 30S ribosomal subunit. Contacts proteins S9 and S11.

One of the primary rRNA binding proteins, it binds directly to 16S rRNA where it nucleates assembly of the head domain of the 30S subunit. Is located at the subunit interface close to the decoding center, probably blocks exit of the E-site tRNA. This Bartonella quintana (strain Toulouse) (Rochalimaea quintana) protein is Small ribosomal subunit protein uS7.